Consider the following 547-residue polypeptide: Chaperonin GroEL (547 aa).

Residues 30-33, Lys-51, 87-91, Gly-415, 479-481, and Asp-495 contribute to the ATP site; these read TLGP, DGTTT, and NAA.

This sequence belongs to the chaperonin (HSP60) family. In terms of assembly, forms a cylinder of 14 subunits composed of two heptameric rings stacked back-to-back. Interacts with the co-chaperonin GroES.

It localises to the cytoplasm. It carries out the reaction ATP + H2O + a folded polypeptide = ADP + phosphate + an unfolded polypeptide.. Functionally, together with its co-chaperonin GroES, plays an essential role in assisting protein folding. The GroEL-GroES system forms a nano-cage that allows encapsulation of the non-native substrate proteins and provides a physical environment optimized to promote and accelerate protein folding. The sequence is that of Chaperonin GroEL from Bordetella bronchiseptica (strain ATCC BAA-588 / NCTC 13252 / RB50) (Alcaligenes bronchisepticus).